Reading from the N-terminus, the 315-residue chain is HTH-type transcriptional regulator TreR (315 aa).

The 55-residue stretch at Leu-5–Gly-59 folds into the HTH lacI-type domain. Positions Ile-7 to Asn-26 form a DNA-binding region, H-T-H motif. Residues Arg-71–Glu-77, Gly-126, Arg-147, Asp-187–Thr-190, Arg-194, Thr-242, and Tyr-284 contribute to the alpha,alpha-trehalose 6-phosphate site.

Homodimer.

Its function is as follows. Repressor of the treBC operon. It is able to bind trehalose-6-phosphate. The protein is HTH-type transcriptional regulator TreR (treR) of Salmonella typhimurium (strain LT2 / SGSC1412 / ATCC 700720).